Consider the following 763-residue polypeptide: Disintegrin and metalloproteinase domain-containing protein 29 (763 aa).

The first 31 residues, 1-31 (MNMIEALLSMRVLFLTQVFGIFLCFPGLTKA), serve as a signal peptide directing secretion. A propeptide spanning residues 32–200 (GHLHYHSSIE…ILKQSSFEDW (169 aa)) is cleaved from the precursor. Residues asparagine 164, asparagine 177, and asparagine 223 are each glycosylated (N-linked (GlcNAc...) asparagine). Topologically, residues 201–684 (WTHTKIVELV…KTNKKKHFFY (484 aa)) are extracellular. The Peptidase M12B domain occupies 205 to 396 (KIVELVVVVD…NTRCLMENMY (192 aa)). Intrachain disulfides connect cysteine 313-cysteine 390, cysteine 353-cysteine 375, and cysteine 355-cysteine 360. 5 N-linked (GlcNAc...) asparagine glycosylation sites follow: asparagine 374, asparagine 424, asparagine 434, asparagine 475, and asparagine 584. A Disintegrin domain is found at 403-489 (RTRCGNGVVE…ECPDDAYVED (87 aa)). Cysteine 461 and cysteine 481 are joined by a disulfide. Intrachain disulfides connect cysteine 631-cysteine 642, cysteine 636-cysteine 648, and cysteine 650-cysteine 659. In terms of domain architecture, EGF-like spans 631–660 (CTPAFCNYRGICNNKHHCHCNFHWDPPNCM). A helical transmembrane segment spans residues 685–705 (LLLLQLIILACLLSCLLWLLF). Residues 706 to 763 (NIKGSKRKPQVQPTPVKTKKVSKKVPSQKPSPVPSPSLPQLRMPSRSASPTSSIKSTN) are Cytoplasmic-facing. The interval 712-763 (RKPQVQPTPVKTKKVSKKVPSQKPSPVPSPSLPQLRMPSRSASPTSSIKSTN) is disordered. The segment covering 751 to 763 (RSASPTSSIKSTN) has biased composition (polar residues).

Its subcellular location is the membrane. Its function is as follows. May be involved in spermatogenesis and fertilization. Seems to be a non catalytic metalloprotease-like protein. This chain is Disintegrin and metalloproteinase domain-containing protein 29 (Adam29), found in Mus musculus (Mouse).